A 739-amino-acid polypeptide reads, in one-letter code: Phosphoribosylformylglycinamidine synthase subunit PurL (739 aa).

Residue His54 is part of the active site. 2 residues coordinate ATP: Tyr57 and Lys96. Residue Glu98 coordinates Mg(2+). Substrate contacts are provided by residues 99 to 102 (SHNH) and Arg121. His100 acts as the Proton acceptor in catalysis. Asp122 contacts Mg(2+). Gln245 is a substrate binding site. Asp273 is a Mg(2+) binding site. 317–319 (ESQ) serves as a coordination point for substrate. ATP-binding residues include Asp500 and Gly537. Asn538 serves as a coordination point for Mg(2+). Ser540 serves as a coordination point for substrate.

It belongs to the FGAMS family. As to quaternary structure, monomer. Part of the FGAM synthase complex composed of 1 PurL, 1 PurQ and 2 PurS subunits.

It localises to the cytoplasm. The enzyme catalyses N(2)-formyl-N(1)-(5-phospho-beta-D-ribosyl)glycinamide + L-glutamine + ATP + H2O = 2-formamido-N(1)-(5-O-phospho-beta-D-ribosyl)acetamidine + L-glutamate + ADP + phosphate + H(+). Its pathway is purine metabolism; IMP biosynthesis via de novo pathway; 5-amino-1-(5-phospho-D-ribosyl)imidazole from N(2)-formyl-N(1)-(5-phospho-D-ribosyl)glycinamide: step 1/2. Its function is as follows. Part of the phosphoribosylformylglycinamidine synthase complex involved in the purines biosynthetic pathway. Catalyzes the ATP-dependent conversion of formylglycinamide ribonucleotide (FGAR) and glutamine to yield formylglycinamidine ribonucleotide (FGAM) and glutamate. The FGAM synthase complex is composed of three subunits. PurQ produces an ammonia molecule by converting glutamine to glutamate. PurL transfers the ammonia molecule to FGAR to form FGAM in an ATP-dependent manner. PurS interacts with PurQ and PurL and is thought to assist in the transfer of the ammonia molecule from PurQ to PurL. In Bacillus anthracis (strain A0248), this protein is Phosphoribosylformylglycinamidine synthase subunit PurL.